We begin with the raw amino-acid sequence, 210 residues long: 2-hydroxy-3-keto-5-methylthiopentenyl-1-phosphate phosphatase (210 aa).

Belongs to the HAD-like hydrolase superfamily. MtnX family.

It carries out the reaction 2-hydroxy-5-methylsulfanyl-3-oxopent-1-enyl phosphate + H2O = 1,2-dihydroxy-5-(methylsulfanyl)pent-1-en-3-one + phosphate. The protein operates within amino-acid biosynthesis; L-methionine biosynthesis via salvage pathway; L-methionine from S-methyl-5-thio-alpha-D-ribose 1-phosphate: step 4/6. Dephosphorylates 2-hydroxy-3-keto-5-methylthiopentenyl-1-phosphate (HK-MTPenyl-1-P) yielding 1,2-dihydroxy-3-keto-5-methylthiopentene (DHK-MTPene). This chain is 2-hydroxy-3-keto-5-methylthiopentenyl-1-phosphate phosphatase, found in Microcystis aeruginosa.